Reading from the N-terminus, the 436-residue chain is MADYLGKKVVIIGLGLTGLSCVDFFMARGVIPRVMDTRTAPPGKDKLPDGVECHSGSLNADWLMDADLIVVSPGIALATAVLQAAANAGIEIVGDIELFCREATAPIVAITGSNGKSTVTSLVGEMAKAANWQVGVGGNIGLPALELLKKSCQLYVLELSSFQLETTYSLNATAAAVLNVTEDHMDRYPQGVSQYRAAKLRIYHQAKRCIVNAQDPLTLPEMGMDSRCVSFGVDCGDYQLDSENAFLKVHNQSLLATNEIKLTGRHNYANGLVALALADAVGIPREASLATLTVYPGLDHRFQLARLNKGVRWINDSKATNVGSTMAALDGLNLEGTLYLLLGGDGKSADFSPLKPFLCGNKVQLYCFGRDGKQLAQLRPEIATLTETMEQAIRDIAPRLVAGDMVLLSPACASLDQFRNFEQRGHEFTRLAEELG.

112–118 (GSNGKST) provides a ligand contact to ATP.

The protein belongs to the MurCDEF family.

The protein resides in the cytoplasm. It carries out the reaction UDP-N-acetyl-alpha-D-muramoyl-L-alanine + D-glutamate + ATP = UDP-N-acetyl-alpha-D-muramoyl-L-alanyl-D-glutamate + ADP + phosphate + H(+). It participates in cell wall biogenesis; peptidoglycan biosynthesis. In terms of biological role, cell wall formation. Catalyzes the addition of glutamate to the nucleotide precursor UDP-N-acetylmuramoyl-L-alanine (UMA). In Photorhabdus laumondii subsp. laumondii (strain DSM 15139 / CIP 105565 / TT01) (Photorhabdus luminescens subsp. laumondii), this protein is UDP-N-acetylmuramoylalanine--D-glutamate ligase.